The sequence spans 160 residues: Cytochrome b6-f complex subunit 4 (160 aa).

Helical transmembrane passes span 36 to 56 (LLYIFPVVILGTIACNVGLAV), 95 to 115 (LLGVLLMASVPAGLLTVPFLE), and 131 to 151 (TVFLVGTVVALWLGIGATLPI).

The protein belongs to the cytochrome b family. PetD subfamily. In terms of assembly, the 4 large subunits of the cytochrome b6-f complex are cytochrome b6, subunit IV (17 kDa polypeptide, petD), cytochrome f and the Rieske protein, while the 4 small subunits are petG, petL, petM and petN. The complex functions as a dimer.

It localises to the plastid. The protein localises to the chloroplast thylakoid membrane. In terms of biological role, component of the cytochrome b6-f complex, which mediates electron transfer between photosystem II (PSII) and photosystem I (PSI), cyclic electron flow around PSI, and state transitions. The chain is Cytochrome b6-f complex subunit 4 from Spinacia oleracea (Spinach).